A 546-amino-acid polypeptide reads, in one-letter code: Chaperonin GroEL (546 aa).

ATP-binding positions include 30 to 33 (TLGP), K51, 87 to 91 (DGTTT), G415, 479 to 481 (NAA), and D495. The interval 527-546 (DESAAPAMPGGMGGMGDMGM) is disordered. Residues 536-546 (GGMGGMGDMGM) show a composition bias toward gly residues.

The protein belongs to the chaperonin (HSP60) family. Forms a cylinder of 14 subunits composed of two heptameric rings stacked back-to-back. Interacts with the co-chaperonin GroES.

It is found in the cytoplasm. It catalyses the reaction ATP + H2O + a folded polypeptide = ADP + phosphate + an unfolded polypeptide.. Together with its co-chaperonin GroES, plays an essential role in assisting protein folding. The GroEL-GroES system forms a nano-cage that allows encapsulation of the non-native substrate proteins and provides a physical environment optimized to promote and accelerate protein folding. The sequence is that of Chaperonin GroEL from Acidovorax sp. (strain JS42).